A 228-amino-acid polypeptide reads, in one-letter code: Vacuolar-sorting protein snf7 (228 aa).

2 coiled-coil regions span residues 25–94 and 125–226; these read ILGL…QINA and EKVD…QAEM.

It belongs to the SNF7 family. A component of the endosomal sorting required for transport complex III (ESCRT-III).

The protein localises to the cytoplasm. The protein resides in the endosome membrane. In terms of biological role, required for the sorting and concentration of proteins resulting in the entry of these proteins into the invaginating vesicles of the multivesicular body (MVB). Also required for the proteolytic cleavage of the transcription factor pacc-1 in response to alkaline ambient pH. The chain is Vacuolar-sorting protein snf7 (vsp-3) from Neurospora crassa (strain ATCC 24698 / 74-OR23-1A / CBS 708.71 / DSM 1257 / FGSC 987).